We begin with the raw amino-acid sequence, 381 residues long: Flap endonuclease 1 (381 aa).

Positions 1–105 (MGIKNLATLI…YELDKRKVRR (105 aa)) are N-domain. Asp-34 is a binding site for Mg(2+). DNA is bound by residues Arg-47 and Arg-71. Mg(2+) is bound by residues Asp-87, Glu-156, Glu-158, Asp-177, and Asp-179. Positions 120–251 (EIIKHERRLV…VNALKLIKEH (132 aa)) are I-domain. Glu-156 is a binding site for DNA. DNA-binding residues include Gly-229 and Asp-231. Mg(2+) is bound at residue Asp-231. The interval 339 to 347 (VQKRLDSFF) is interaction with PCNA. Residues 360 to 381 (AAKKAKDAKKKAAAKGKIAKRR) form a disordered region. The segment covering 365–381 (KDAKKKAAAKGKIAKRR) has biased composition (basic residues).

The protein belongs to the XPG/RAD2 endonuclease family. FEN1 subfamily. In terms of assembly, interacts with PCNA. Three molecules of FEN1 bind to one PCNA trimer with each molecule binding to one PCNA monomer. PCNA stimulates the nuclease activity without altering cleavage specificity. It depends on Mg(2+) as a cofactor. In terms of processing, phosphorylated. Phosphorylation upon DNA damage induces relocalization to the nuclear plasma.

The protein localises to the nucleus. The protein resides in the nucleolus. It is found in the nucleoplasm. Its subcellular location is the mitochondrion. Its function is as follows. Structure-specific nuclease with 5'-flap endonuclease and 5'-3' exonuclease activities involved in DNA replication and repair. During DNA replication, cleaves the 5'-overhanging flap structure that is generated by displacement synthesis when DNA polymerase encounters the 5'-end of a downstream Okazaki fragment. It enters the flap from the 5'-end and then tracks to cleave the flap base, leaving a nick for ligation. Also involved in the long patch base excision repair (LP-BER) pathway, by cleaving within the apurinic/apyrimidinic (AP) site-terminated flap. Acts as a genome stabilization factor that prevents flaps from equilibrating into structures that lead to duplications and deletions. Also possesses 5'-3' exonuclease activity on nicked or gapped double-stranded DNA, and exhibits RNase H activity. Also involved in replication and repair of rDNA and in repairing mitochondrial DNA. This chain is Flap endonuclease 1, found in Kluyveromyces lactis (strain ATCC 8585 / CBS 2359 / DSM 70799 / NBRC 1267 / NRRL Y-1140 / WM37) (Yeast).